Here is a 623-residue protein sequence, read N- to C-terminus: Protein Atg16l2 (623 aa).

Over residues 64–79 the composition is skewed to basic and acidic residues; sequence PKDAISTRHEDWREEV. Residues 64–93 are disordered; sequence PKDAISTRHEDWREEVSGTGPDQVSSPASL. Residues 116–229 are a coiled coil; that stretch reads VKKSAALDTL…ANQALVSQEL (114 aa). 7 WD repeats span residues 338–377, 382–421, 424–458, 459–502, 504–543, 550–589, and 593–623; these read AHLSEVNAVCFGPNSSLLATGGADRLIHLWNVVGGRLEAN, GAGGSITSVDFDPSGSQVLAATYNQAAQLWKVGETQSKET, GHKDKVTAAKFKLTRHQAVTGSRDRTVKEWDLGRA, YCSR…CIQV, PVQGRVTSLHLSYDQLHLLSCSRDNTLKVIDLRISNIRQV, KCSSDWTKAVFSPDRSYALAGSSNGDLYIWDVNTGKLETS, and PHCTAVNAVAWCFSGNHVVSVDQGRKVVLWH.

The protein belongs to the WD repeat ATG16 family. Homooligomer. Heterooligomer with ATG16L2. Interacts with ATG5. Self-oligomerizes to form a 800-kDa complex composed of ATG12-ATG5 and ATG16L2. Interacts with RAB33B. As to expression, widely expressed.

It localises to the cytoplasm. It is found in the cytosol. May play a role in regulating epithelial homeostasis in an ATG16L1-dependent manner. This is Protein Atg16l2 (Atg16l2) from Mus musculus (Mouse).